A 113-amino-acid chain; its full sequence is Probable 4-amino-4-deoxy-L-arabinose-phosphoundecaprenol flippase subunit ArnE (113 aa).

The next 3 helical transmembrane spans lie at 39 to 59 (IFWL…WLRL), 62 to 82 (ILPL…VTLI), and 91 to 111 (VNVK…LMSM). The region spanning 42–111 (LITAIAMLGF…IMLGIVLMSM (70 aa)) is the EamA domain.

This sequence belongs to the ArnE family. In terms of assembly, heterodimer of ArnE and ArnF.

The protein resides in the cell inner membrane. The protein operates within bacterial outer membrane biogenesis; lipopolysaccharide biosynthesis. Functionally, translocates 4-amino-4-deoxy-L-arabinose-phosphoundecaprenol (alpha-L-Ara4N-phosphoundecaprenol) from the cytoplasmic to the periplasmic side of the inner membrane. The polypeptide is Probable 4-amino-4-deoxy-L-arabinose-phosphoundecaprenol flippase subunit ArnE (Proteus mirabilis (strain HI4320)).